The sequence spans 66 residues: Beta-mammal toxin Co2 (66 aa).

An LCN-type CS-alpha/beta domain is found at 1-66 (KEGYIVNYHD…VWPLPKKRCN (66 aa)). Disulfide bonds link Cys-12–Cys-65, Cys-16–Cys-41, Cys-25–Cys-46, and Cys-29–Cys-48.

In terms of tissue distribution, expressed by the venom gland.

It is found in the secreted. Its function is as follows. Beta toxins bind voltage-independently at site-4 of sodium channels (Nav) and shift the voltage of activation toward more negative potentials thereby affecting sodium channel activation and promoting spontaneous and repetitive firing. This toxin acts on human Nav1.1/SCN1A, Nav1.2/SCN2A, Nav1.4/SCN4A and Nav1.6/SCN8A voltage-gated sodium channels. Also, it reduces the peak of sodium currents in Nav1.5/SCN5A at all potentials. In vivo, is lethal to mice when intraperitoneally injected at a dose of 5ug. No activity is observed when injected into crickets or woodlice. This Centruroides ornatus (Scorpion) protein is Beta-mammal toxin Co2.